Here is a 501-residue protein sequence, read N- to C-terminus: Phosphatidylinositol 4-kinase type 2-beta (501 aa).

2 disordered regions span residues 1 to 30 (MMAE…SSEV) and 65 to 122 (TELE…NHFP). A compositionally biased stretch (polar residues) spans 17-27 (GDSTPETNFLS). Residues 76-88 (ALLLPGPAGSLSP) are compositionally biased toward low complexity. Polar residues predominate over residues 99–117 (NMLSSSSDNLASPGNSSGE). In terms of domain architecture, PI3K/PI4K catalytic spans 141 to 471 (GVFPERISQG…VQMPRVVVER (331 aa)). Residues 147 to 153 (ISQGSSG) form a G-loop region. ATP-binding residues include Ser154 and Lys169. Residues 174-176 (EPY) are important for substrate binding. Residues 182 to 195 (KWTKYFHKVCCPCC) are important for interaction with membranes. Residues 278-281 (QLFV) and 292-293 (RK) each bind ATP. An important for interaction with membranes region spans residues 285 to 293 (HEADFWLRK). The tract at residues 322–330 (RNTDRGNDN) is catalytic loop. Residues 362-382 (AIDNGLAFPFKHPDEWRAYPF) are activation loop. Asp364 contributes to the ATP binding site. The tract at residues 377-386 (WRAYPFHWAW) is important for interaction with membranes.

The protein belongs to the PI3/PI4-kinase family. Type II PI4K subfamily.

The protein localises to the cytoplasm. It is found in the cytosol. Its subcellular location is the golgi apparatus membrane. The protein resides in the endoplasmic reticulum membrane. It localises to the cell membrane. The protein localises to the early endosome membrane. The enzyme catalyses a 1,2-diacyl-sn-glycero-3-phospho-(1D-myo-inositol) + ATP = a 1,2-diacyl-sn-glycero-3-phospho-(1D-myo-inositol 4-phosphate) + ADP + H(+). Functionally, contributes to the overall PI4-kinase activity of the cell. This contribution may be especially significant in plasma membrane, endosomal and Golgi compartments. The phosphorylation of phosphatidylinositol (PI) to PI4P is the first committed step in the generation of phosphatidylinositol 4,5-bisphosphate (PIP2), a precursor of the second messenger inositol 1,4,5-trisphosphate (InsP3). The sequence is that of Phosphatidylinositol 4-kinase type 2-beta (pi4k2b) from Danio rerio (Zebrafish).